The chain runs to 449 residues: Bifunctional F420 biosynthesis protein FbiB (449 aa).

A coenzyme F420:L-glutamate ligase region spans residues 1 to 245; sequence MSPAGEHGTA…PGTEDLFWLG (245 aa). GTP contacts are provided by residues 21–24, Ser51, and Lys56; that span reads LPEF. Asp110 is a binding site for a divalent metal cation. Asn113 contacts GTP. The a divalent metal cation site is built by Asp151 and Thr152. Residues 246-449 form a dehydro-coenzyme F420-0 reductase region; it reads TAEAIELGRR…ADPGDLLIRK (204 aa). FMN contacts are provided by residues 261–265 and Ala289; that span reads RRSVR. Asp321 provides a ligand contact to coenzyme F420-(gamma-Glu)n. FMN-binding residues include Gly400 and Arg437.

The protein in the N-terminal section; belongs to the CofE family. It depends on Mg(2+) as a cofactor. Requires Mn(2+) as cofactor. K(+) is required as a cofactor.

The enzyme catalyses oxidized coenzyme F420-0 + GTP + L-glutamate = oxidized coenzyme F420-1 + GDP + phosphate + H(+). The catalysed reaction is oxidized coenzyme F420-1 + GTP + L-glutamate = oxidized coenzyme F420-2 + GDP + phosphate + H(+). It carries out the reaction oxidized coenzyme F420-(gamma-L-Glu)(n) + GTP + L-glutamate = oxidized coenzyme F420-(gamma-L-Glu)(n+1) + GDP + phosphate + H(+). It catalyses the reaction oxidized coenzyme F420-0 + FMN + H(+) = dehydro coenzyme F420-0 + FMNH2. Its pathway is cofactor biosynthesis; coenzyme F420 biosynthesis. In terms of biological role, bifunctional enzyme that catalyzes the GTP-dependent successive addition of multiple gamma-linked L-glutamates to the L-lactyl phosphodiester of 7,8-didemethyl-8-hydroxy-5-deazariboflavin (F420-0) to form polyglutamated F420 derivatives, and the FMNH2-dependent reduction of dehydro-F420-0 to form F420-0. The protein is Bifunctional F420 biosynthesis protein FbiB of Mycobacterium avium (strain 104).